We begin with the raw amino-acid sequence, 265 residues long: Mlc titration factor A (265 aa).

4 residues coordinate Zn(2+): His-111, His-148, His-152, and Glu-211.

It belongs to the MtfA family. In terms of assembly, interacts with Mlc. Requires Zn(2+) as cofactor.

The protein resides in the cytoplasm. Involved in the modulation of the activity of the glucose-phosphotransferase system (glucose-PTS). Interacts with the transcriptional repressor Mlc, preventing its interaction with DNA and leading to the modulation of expression of genes regulated by Mlc, including ptsG, which encodes the PTS system glucose-specific EIICB component. Its function is as follows. Shows zinc-dependent metallopeptidase activity. The chain is Mlc titration factor A from Salmonella schwarzengrund (strain CVM19633).